A 143-amino-acid chain; its full sequence is MAPPTLITANCCCETEVKYFKYCSTSLFVLILFNSWITVDLVAEKPLVDETYLFEYPTFFLVNATDGGALKGTDANPAMVDLFNEDTNFWNLEALSLFVETSKLADGIMMQTYFSLQISLSFAFSGICVKYITGLKNNIQKCS.

A run of 2 helical transmembrane segments spans residues 20–39 (FKYCSTSLFVLILFNSWITV) and 113–135 (YFSLQISLSFAFSGICVKYITGL).

The protein localises to the membrane. This is an uncharacterized protein from Saccharomyces cerevisiae (strain ATCC 204508 / S288c) (Baker's yeast).